The chain runs to 76 residues: MRTFALLTAMLLLVALHAQAEARQARADEAAAQQQPGADDQGMAHSFTWPENAALPLSESAKGLRCVCTRGFCRLL.

The first 22 residues, 1–22, serve as a signal peptide directing secretion; that stretch reads MRTFALLTAMLLLVALHAQAEA. The propeptide occupies 23 to 64; sequence RQARADEAAAQQQPGADDQGMAHSFTWPENAALPLSESAKGL. The segment at 25–45 is disordered; that stretch reads ARADEAAAQQQPGADDQGMAH. Residues 30-44 show a composition bias toward low complexity; that stretch reads AAAQQQPGADDQGMA. Residue Arg-65 forms a Cyclopeptide (Arg-Cys) (interchain with C-73 in subunit A); in form BTD-3 linkage. Arg-65 is covalently cross-linked (Cyclopeptide (Arg-Cys) (interchain with C-73 in subunit B); in form BTD-1). Arg-65 is covalently cross-linked (Cyclopeptide (Arg-Cys) (interchain with C-73 in subunit C); in form BTD-4). A Cyclopeptide (Arg-Cys) (interchain with C-73 in subunit D); in form BTD-7 cross-link involves residue Arg-65. A disulfide bond links Cys-68 and Cys-73. Cys-73 is covalently cross-linked (Cyclopeptide (Cys-Arg) (interchain with R-65 in subunit A); in form BTD-3). Cys-73 participates in a covalent cross-link: Cyclopeptide (Cys-Arg) (interchain with R-65 in subunit B); in form BTD-1. A Cyclopeptide (Cys-Arg) (interchain with R-65 in subunit C); in form BTD-4 cross-link involves residue Cys-73. A Cyclopeptide (Cys-Arg) (interchain with R-65 in subunit D); in form BTD-7 cross-link involves residue Cys-73. The propeptide occupies 74 to 76; that stretch reads RLL.

The protein belongs to the alpha-defensin family. Theta subfamily. In terms of assembly, BTD-1 is a cyclic heterodimer composed of subunits A and B; disulfide-linked. BTD-3 is a cyclic homodimer composed of two subunits A; disulfide-linked. BTD-4 is a cyclic heterodimer composed of subunits A and C; disulfide-linked. BTD-7 is a cyclic heterodimer composed of subunits A and D; disulfide-linked. Post-translationally, forms a cyclic peptide with subunit B (BTD-1), subunit A (BTD-3), subunit C (BTD-4), or subunit D (BTD-7). An additional intersubunit disulfide bond is formed.

In terms of biological role, BTD-1, BTD-3, BTD-4 and BTD-7 have antimicrobial activity against the Gram-negative bacterium E.coli ML35, the Gram-positive bacterium S.aureus 502a, and the fungus C.albicans 16820. BTD-3 is more effective against E.coli than BTD-1, BTD-4 and BTD-7. The sequence is that of Theta defensin subunit A (BTDA) from Papio anubis (Olive baboon).